A 437-amino-acid polypeptide reads, in one-letter code: Cytochrome c biogenesis protein Ccs1 (437 aa).

The next 3 membrane-spanning stretches (helical) occupy residues 23 to 43 (LQFS…GTII), 82 to 102 (TWWF…CSLS), and 168 to 188 (LAPI…VLGL).

Belongs to the Ccs1/CcsB family. In terms of assembly, may interact with CcsA.

Its subcellular location is the plastid. It is found in the chloroplast thylakoid membrane. In terms of biological role, required during biogenesis of c-type cytochromes (cytochrome c6 and cytochrome f) at the step of heme attachment. This is Cytochrome c biogenesis protein Ccs1 from Porphyra purpurea (Red seaweed).